The primary structure comprises 36 residues: Kappa-theraphotoxin-Pg1b (36 aa).

Intrachain disulfides connect Cys-4–Cys-19, Cys-11–Cys-24, and Cys-18–Cys-31.

The protein belongs to the neurotoxin 10 (Hwtx-1) family. 44 (Jztx-4) subfamily. Expressed by the venom gland.

It localises to the secreted. In terms of biological role, gating modifier of Kv2.1/KCNB1, Kv2.2/KCNB2 and Kv4.3/KCND3 channels. This is Kappa-theraphotoxin-Pg1b from Chilobrachys guangxiensis (Chinese earth tiger tarantula).